Here is a 248-residue protein sequence, read N- to C-terminus: MQTTFRRILILFVGLLVPLFFACQSNSQVDAAPSAAPQLSASPAKLDPLPYDYAALEPYIDAQTMRLHHDKHHATYVNNINETLKAYPDLQKQSVDSLIQNLNQVPEAIRTKIRNNGGGHVNHTMFWQIMAPKAGGTPTGAVAKAIDQTFGSFDAFKQQFNKAGADRFGSGWAWLVSDRQGKLSITSTANQDNPLMSNPNAYPILGNDVWEHAYYLKYQNRRAEYLTNWWNVVNWQAVNQRYAQAQRK.

Positions 1–41 (MQTTFRRILILFVGLLVPLFFACQSNSQVDAAPSAAPQLSA) are cleaved as a signal peptide. Mn(2+)-binding residues include His-68, His-123, Asp-208, and His-212.

The protein belongs to the iron/manganese superoxide dismutase family. In terms of assembly, homodimer. The cofactor is Mn(2+).

It catalyses the reaction 2 superoxide + 2 H(+) = H2O2 + O2. In terms of biological role, destroys superoxide anion radicals which are normally produced within the cells and which are toxic to biological systems. This Leptolyngbya boryana (Plectonema boryanum) protein is Superoxide dismutase [Mn] 1 (sodA1).